Reading from the N-terminus, the 1640-residue chain is Clathrin heavy chain 2 (1640 aa).

Position 2 is an N-acetylalanine (Ala-2). A globular terminal domain region spans residues 2 to 479; that stretch reads AQILPVRFQE…TDPMLALSVY (478 aa). WD40-like repeat stretches follow at residues 24 to 67, 68 to 107, 108 to 149, 150 to 195, 196 to 257, 258 to 301, and 302 to 330; these read NIGF…RPIS, AESA…MAEE, VIFW…TSLV, GCQV…QPIE, GHAA…PEAQ, NDFP…ISAD, and TIFV…VCVE. A Phosphoserine modification is found at Ser-67. Residue Tyr-184 is modified to Phosphotyrosine. Thr-394 carries the post-translational modification Phosphothreonine. The binding site for the uncoating ATPase, involved in lattice disassembly stretch occupies residues 449-465; it reads EKWLKEDKLECSEELGD. Positions 480–523 are flexible linker; it reads LRANVPSKVIQCFAETGQFQKIVLYAKKVGYTPDWIFLLRGVMK. The interval 524-634 is distal segment; that stretch reads ISPEQGLQFS…QALEHYTDLY (111 aa). The interval 524–1640 is heavy chain arm; the sequence is ISPEQGLQFS…PLVFDFDGHE (1117 aa). CHCR repeat units follow at residues 537-683, 686-828, 833-972, 979-1124, 1128-1269, 1274-1420, and 1423-1566; these read VQDE…QLCV, ASKY…SEEV, IMAV…QLID, LSET…VKEA, YIRG…FRFA, LHIV…LLIN, and LLVL…RECF. The residue at position 634 (Tyr-634) is a Phosphotyrosine. The tract at residues 639–1640 is proximal segment; sequence AVVHTHLLNP…PLVFDFDGHE (1002 aa). The residue at position 737 (Lys-737) is an N6-succinyllysine. At Lys-856 the chain carries N6-acetyllysine. At Tyr-899 the chain carries Phosphotyrosine. Ser-1167 is subject to Phosphoserine. At Tyr-1206 the chain carries Phosphotyrosine. Residues 1213–1522 form an involved in binding clathrin light chain region; it reads AAKLLYSNVS…YLYKGNNWWA (310 aa). Ser-1229 is subject to Phosphoserine. Lys-1441 carries the N6-acetyllysine; alternate modification. The residue at position 1441 (Lys-1441) is an N6-succinyllysine; alternate. A phosphotyrosine mark is found at Tyr-1477 and Tyr-1487. Ser-1494 carries the post-translational modification Phosphoserine. Position 1501 is an N6-acetyllysine (Lys-1501). Residues 1551-1640 are trimerization; sequence QKLLQWFLEE…PLVFDFDGHE (90 aa).

Belongs to the clathrin heavy chain family. As to quaternary structure, clathrin triskelions, composed of 3 heavy chains and 3 light chains, are the basic subunits of the clathrin coat. In the presence of light chains, hub assembly is influenced by both the pH and the concentration of calcium. May interact with OCRL. Interacts with AFTPH/aftiphilin. As to expression, maximal levels in skeletal muscle. High levels in heart and testis. Low expression detected in all other tissues.

The protein localises to the cytoplasmic vesicle membrane. Its subcellular location is the membrane. The protein resides in the coated pit. In terms of biological role, clathrin is the major protein of the polyhedral coat of coated pits and vesicles. Two different adapter protein complexes link the clathrin lattice either to the plasma membrane or to the trans-Golgi network. This Homo sapiens (Human) protein is Clathrin heavy chain 2 (CLTCL1).